The sequence spans 707 residues: MGNMRSLVKMLMVVLFLGWIFVWIMISTNRFQNIWTPKLAKYLKTTYFGPQGMNLVLLTVPMMFIAVLSCVYLHTQKQPSQTQSLYKCREWKVKGRMGRVMMVMNPLGIVTATELTFSLLFLALLVWALSNYLYLSYHVHLHNHDNANDMCRWQAKFRAFGLRIGYVGHYCWAFLFFPVTRASTILPLVGLTSESSIKYHIWLGHVSNFCFLVHTVVFLIYWAMVNKLMETFAWNATYVPNLAGTIAMVIGIAIWVTSLPSFRRKKFEIFFYTHHLYGLYIVFYAIHVGDSWFCMILPNIFLFFIDRYLRFLQSTKRSRLVSAKILPSDNLELTFAKTSGLHYTPTSILFLHVPSISKLQWHPFTITSSSNLEKDTLSVVIRKQGSWTQKLYTHLSSSIDSLEVSTEGPYGPNSFDVSRHDSLILVGGGSGVTPFISVIRELIFQSQNRSTKLPNVLLVCAFKNYHDLAFLDLIFPSDISVSDISKLNLRIEAYITREDKKPETTDDHKLLQTKWFKPQPLDSPISPVLGPNNFLWLGVVILSSFVMFLLLIGIVTRYYIYPVDHNTGSIYNFTYRVLWVMFLGCVCIFISSSIIFLWRKKENKEGDKDSKKQVQSVEFQTPTSSPGSWFHGHERELESVPYQSIVQATSVHFGSKPNLKKILFEAEGSEDVGVMVCGPKKMRHEVAKICSSGLAKNLHFEAISFNW.

Over 1–9 the chain is Cytoplasmic; that stretch reads MGNMRSLVK. A helical transmembrane segment spans residues 10 to 29; that stretch reads MLMVVLFLGWIFVWIMISTN. The Extracellular portion of the chain corresponds to 30-54; the sequence is RFQNIWTPKLAKYLKTTYFGPQGMN. The helical transmembrane segment at 55–73 threads the bilayer; the sequence is LVLLTVPMMFIAVLSCVYL. The Cytoplasmic portion of the chain corresponds to 74-106; it reads HTQKQPSQTQSLYKCREWKVKGRMGRVMMVMNP. The chain crosses the membrane as a helical span at residues 107 to 130; the sequence is LGIVTATELTFSLLFLALLVWALS. Residues 131-198 lie on the Extracellular side of the membrane; it reads NYLYLSYHVH…VGLTSESSIK (68 aa). Positions 165 to 284 constitute a Ferric oxidoreductase domain; that stretch reads GYVGHYCWAF…HLYGLYIVFY (120 aa). Residues 199-222 form a helical membrane-spanning segment; sequence YHIWLGHVSNFCFLVHTVVFLIYW. Residues His-200 and His-214 each coordinate heme. Over 223-272 the chain is Cytoplasmic; sequence AMVNKLMETFAWNATYVPNLAGTIAMVIGIAIWVTSLPSFRRKKFEIFFY. The chain crosses the membrane as a helical span at residues 273–297; that stretch reads THHLYGLYIVFYAIHVGDSWFCMIL. Residues His-274 and His-287 each coordinate heme. At 298-319 the chain is on the extracellular side; that stretch reads PNIFLFFIDRYLRFLQSTKRSR. The FAD-binding FR-type domain occupies 313 to 416; the sequence is QSTKRSRLVS…EGPYGPNSFD (104 aa). A helical membrane pass occupies residues 320–340; that stretch reads LVSAKILPSDNLELTFAKTSG. At 341–533 the chain is on the cytoplasmic side; it reads LHYTPTSILF…PISPVLGPNN (193 aa). Position 362 to 365 (362 to 365) interacts with FAD; it reads HPFT. 408–411 contributes to the NAD(+) binding site; sequence GPYG. Residues 534 to 556 traverse the membrane as a helical segment; sequence FLWLGVVILSSFVMFLLLIGIVT. Residues 557–576 lie on the Extracellular side of the membrane; sequence RYYIYPVDHNTGSIYNFTYR. The chain crosses the membrane as a helical span at residues 577–598; the sequence is VLWVMFLGCVCIFISSSIIFLW. Topologically, residues 599-707 are cytoplasmic; that stretch reads RKKENKEGDK…LHFEAISFNW (109 aa). Positions 608–630 are disordered; the sequence is KDSKKQVQSVEFQTPTSSPGSWF. A compositionally biased stretch (polar residues) spans 613–627; that stretch reads QVQSVEFQTPTSSPG.

It belongs to the ferric reductase (FRE) family. Requires FAD as cofactor. Expressed at low levels in roots, shoots, pedicels and inflorescence stems, flowers, sepals, stigmas and anther filaments.

Its subcellular location is the cell membrane. The catalysed reaction is 2 a Fe(II)-siderophore + NAD(+) + H(+) = 2 a Fe(III)-siderophore + NADH. Functionally, ferric chelate reductase probably involved in iron reduction in shoots. May participate in the transport of electrons to a Fe(3+) ion via FAD and heme intermediates. May act in iron metabolism in reproductive organs. May function as root surface cupric chelate reductase and participate in the reduction of Cu(2+), for Cu(+) acquisition via Cu(+) transporters in response to copper deficiency. This is Ferric reduction oxidase 5 (FRO5) from Arabidopsis thaliana (Mouse-ear cress).